A 118-amino-acid chain; its full sequence is Fluoride-specific ion channel FluC 2 (118 aa).

The next 4 membrane-spanning stretches (helical) occupy residues 1 to 21 (MIEA…RFAI), 33 to 53 (FPIA…YIIG), 55 to 75 (GVTT…FTTF), and 93 to 113 (TFLL…FLGM). The Na(+) site is built by G70 and T73.

The protein belongs to the fluoride channel Fluc/FEX (TC 1.A.43) family.

It localises to the cell membrane. The catalysed reaction is fluoride(in) = fluoride(out). Its activity is regulated as follows. Na(+) is not transported, but it plays an essential structural role and its presence is essential for fluoride channel function. Its function is as follows. Fluoride-specific ion channel. Important for reducing fluoride concentration in the cell, thus reducing its toxicity. This chain is Fluoride-specific ion channel FluC 2, found in Bacillus cereus (strain ZK / E33L).